We begin with the raw amino-acid sequence, 253 residues long: Exosome complex component Rrp4 (253 aa).

One can recognise an S1 motif domain in the interval 80-153 (GDIVIGIVVD…SRGPILTVQD (74 aa)).

This sequence belongs to the RRP4 family. In terms of assembly, component of the archaeal exosome complex. Forms a trimer of Rrp4 and/or Csl4 subunits. The trimer associates with a hexameric ring-like arrangement composed of 3 Rrp41-Rrp42 heterodimers.

It is found in the cytoplasm. Non-catalytic component of the exosome, which is a complex involved in RNA degradation. Increases the RNA binding and the efficiency of RNA degradation. Confers strong poly(A) specificity to the exosome. The protein is Exosome complex component Rrp4 of Ignisphaera aggregans (strain DSM 17230 / JCM 13409 / AQ1.S1).